The chain runs to 891 residues: Valine--tRNA ligase (891 aa).

The short motif at 43 to 53 is the 'HIGH' region element; the sequence is PFTSGTLHLGH. Positions 536–540 match the 'KMSKS' region motif; sequence KMSKS. Residue K539 participates in ATP binding.

The protein belongs to the class-I aminoacyl-tRNA synthetase family. ValS type 2 subfamily.

Its subcellular location is the cytoplasm. The catalysed reaction is tRNA(Val) + L-valine + ATP = L-valyl-tRNA(Val) + AMP + diphosphate. Its function is as follows. Catalyzes the attachment of valine to tRNA(Val). As ValRS can inadvertently accommodate and process structurally similar amino acids such as threonine, to avoid such errors, it has a 'posttransfer' editing activity that hydrolyzes mischarged Thr-tRNA(Val) in a tRNA-dependent manner. This Pyrococcus furiosus (strain ATCC 43587 / DSM 3638 / JCM 8422 / Vc1) protein is Valine--tRNA ligase.